The chain runs to 320 residues: Beta-ketoacyl-[acyl-carrier-protein] synthase III (320 aa).

Residues cysteine 113 and histidine 247 contribute to the active site. The interval 248–252 (QANRR) is ACP-binding. Asparagine 277 is an active-site residue.

It belongs to the thiolase-like superfamily. FabH family. As to quaternary structure, homodimer.

The protein localises to the cytoplasm. The catalysed reaction is malonyl-[ACP] + acetyl-CoA + H(+) = 3-oxobutanoyl-[ACP] + CO2 + CoA. It participates in lipid metabolism; fatty acid biosynthesis. In terms of biological role, catalyzes the condensation reaction of fatty acid synthesis by the addition to an acyl acceptor of two carbons from malonyl-ACP. Catalyzes the first condensation reaction which initiates fatty acid synthesis and may therefore play a role in governing the total rate of fatty acid production. Possesses both acetoacetyl-ACP synthase and acetyl transacylase activities. Its substrate specificity determines the biosynthesis of branched-chain and/or straight-chain of fatty acids. The protein is Beta-ketoacyl-[acyl-carrier-protein] synthase III of Acidiphilium cryptum (strain JF-5).